A 619-amino-acid chain; its full sequence is MSERQSKYFDYQGIVISSTGQDNQDSETDLVYLIQAHGKAAPKNIMYGVSKCAFVPTNLERNFDNIEEAKNLERRSKIPLKFGEVILWNESDCDHDKRIILHIKREKPIYEASSSRNGLILKVGGVIQPTSTTSFWTPLCTVTMPETEATRAEPDVWLYAWIRFETTMKSGLDPFNMTATFESFDSCDPSDQARVCEAPWNAGSPDSKFGVWRPDPKPADSDDEIDIEPREGWHLPEDKWAEVIKMQLGLYVGERLLICKELSQFDFIIPLQKPFSRGTDKTLIYPAVGEYFHFSAIWSMQHNGFLIYELQPVPLLRQHVTSVNGNLLTRVVPASIRGLFVDKEGTLGLIDDPHHLLSFFEFHPAGYEFLKAMAEVRAVRTSENKSVRYRIVRTSGMSIFENWLRDTQFVVGPVKGIRINEDTVICAKHPNVYFKIPNNLKEGIPIGGGVQFVGKRQAGVDSEIMITECSPCPAFTCKNYSVSGDTRLFQVYLKPNCDHEQLAESDSMGFVDFRELETPCRGKFLAWVRESITVNDCRRAATIMEVCSTAICPPLIAMSANSSRATSARTTPAGSSIGSRSSIQSRASAATSVSSNRFVGPSSRRTPSGTPQSSTSSRV.

The required for prg-1 binding stretch occupies residues 62–101 (NFDNIEEAKNLERRSKIPLKFGEVILWNESDCDHDKRIIL). Composition is skewed to low complexity over residues 563–592 (SRATSARTTPAGSSIGSRSSIQSRASAATS) and 600–619 (GPSSRRTPSGTPQSSTSSRV). The segment at 563 to 619 (SRATSARTTPAGSSIGSRSSIQSRASAATSVSSNRFVGPSSRRTPSGTPQSSTSSRV) is disordered.

As to quaternary structure, interacts (via N-terminus) with prg-1; the interaction is direct. May interact with edg-1. Expressed in germ cells.

It is found in the cytoplasmic granule. It localises to the cytoplasm. The protein resides in the perinuclear region. Its function is as follows. Component of P-granules which is required for P-granule formation and integrity in adult germ cells. Promotes the accumulation of glh-1 mRNA and localization of pgl-1 to P-granules. Involved in RNA-mediated gene silencing (RNAi) in the germline. In particular, it is required for piwi-interacting RNA (piRNA) gene silencing and positively regulates the formation of secondary 22G-RNAs, which are RNA-dependent RNA polymerase-derived endo-siRNAs, typically 22 nucleotides in length with a 5'guanosine residue. Its role in RNAi may also be through positively regulating the expression of the dsRNA-binding protein rde-4. Plays a role in small RNA-directed transgenerational epigenetic inheritance. In Caenorhabditis elegans, this protein is P-granule-associated protein deps-1.